The primary structure comprises 103 residues: Small ribosomal subunit protein uS10 (103 aa).

Belongs to the universal ribosomal protein uS10 family. In terms of assembly, part of the 30S ribosomal subunit.

Its function is as follows. Involved in the binding of tRNA to the ribosomes. This chain is Small ribosomal subunit protein uS10, found in Borreliella burgdorferi (strain ATCC 35210 / DSM 4680 / CIP 102532 / B31) (Borrelia burgdorferi).